We begin with the raw amino-acid sequence, 294 residues long: tRNA dimethylallyltransferase (294 aa).

Residue glycine 10–threonine 17 coordinates ATP. Threonine 12–threonine 17 provides a ligand contact to substrate. Residues aspartate 35–glutamine 38 are interaction with substrate tRNA.

It belongs to the IPP transferase family. In terms of assembly, monomer. It depends on Mg(2+) as a cofactor.

It carries out the reaction adenosine(37) in tRNA + dimethylallyl diphosphate = N(6)-dimethylallyladenosine(37) in tRNA + diphosphate. In terms of biological role, catalyzes the transfer of a dimethylallyl group onto the adenine at position 37 in tRNAs that read codons beginning with uridine, leading to the formation of N6-(dimethylallyl)adenosine (i(6)A). The sequence is that of tRNA dimethylallyltransferase from Streptococcus pneumoniae (strain P1031).